The sequence spans 511 residues: Exodeoxyribonuclease 7 large subunit (511 aa).

The protein belongs to the XseA family. As to quaternary structure, heterooligomer composed of large and small subunits.

The protein resides in the cytoplasm. It carries out the reaction Exonucleolytic cleavage in either 5'- to 3'- or 3'- to 5'-direction to yield nucleoside 5'-phosphates.. Functionally, bidirectionally degrades single-stranded DNA into large acid-insoluble oligonucleotides, which are then degraded further into small acid-soluble oligonucleotides. In Brucella suis biovar 1 (strain 1330), this protein is Exodeoxyribonuclease 7 large subunit.